The primary structure comprises 219 residues: Thiamine-phosphate synthase (219 aa).

4-amino-2-methyl-5-(diphosphooxymethyl)pyrimidine contacts are provided by residues 44-48 (QLREK) and N79. D80 and D99 together coordinate Mg(2+). S117 serves as a coordination point for 4-amino-2-methyl-5-(diphosphooxymethyl)pyrimidine. Position 143-145 (143-145 (TST)) interacts with 2-[(2R,5Z)-2-carboxy-4-methylthiazol-5(2H)-ylidene]ethyl phosphate. A 4-amino-2-methyl-5-(diphosphooxymethyl)pyrimidine-binding site is contributed by K146. Residues G175 and 195-196 (IS) each bind 2-[(2R,5Z)-2-carboxy-4-methylthiazol-5(2H)-ylidene]ethyl phosphate.

Belongs to the thiamine-phosphate synthase family. Mg(2+) is required as a cofactor.

The enzyme catalyses 2-[(2R,5Z)-2-carboxy-4-methylthiazol-5(2H)-ylidene]ethyl phosphate + 4-amino-2-methyl-5-(diphosphooxymethyl)pyrimidine + 2 H(+) = thiamine phosphate + CO2 + diphosphate. The catalysed reaction is 2-(2-carboxy-4-methylthiazol-5-yl)ethyl phosphate + 4-amino-2-methyl-5-(diphosphooxymethyl)pyrimidine + 2 H(+) = thiamine phosphate + CO2 + diphosphate. It carries out the reaction 4-methyl-5-(2-phosphooxyethyl)-thiazole + 4-amino-2-methyl-5-(diphosphooxymethyl)pyrimidine + H(+) = thiamine phosphate + diphosphate. It participates in cofactor biosynthesis; thiamine diphosphate biosynthesis; thiamine phosphate from 4-amino-2-methyl-5-diphosphomethylpyrimidine and 4-methyl-5-(2-phosphoethyl)-thiazole: step 1/1. In terms of biological role, condenses 4-methyl-5-(beta-hydroxyethyl)thiazole monophosphate (THZ-P) and 2-methyl-4-amino-5-hydroxymethyl pyrimidine pyrophosphate (HMP-PP) to form thiamine monophosphate (TMP). The polypeptide is Thiamine-phosphate synthase (Bacillus mycoides (strain KBAB4) (Bacillus weihenstephanensis)).